The following is a 452-amino-acid chain: 1-aminocyclopropane-1-carboxylate synthase 3 (452 aa).

Lys-283 is modified (N6-(pyridoxal phosphate)lysine).

It belongs to the class-I pyridoxal-phosphate-dependent aminotransferase family. It depends on pyridoxal 5'-phosphate as a cofactor. Expressed in leaves. Expressed in roots and leaf blades. Expressed at low levels in leaf sheaths and shoot bases.

It carries out the reaction S-adenosyl-L-methionine = 1-aminocyclopropane-1-carboxylate + S-methyl-5'-thioadenosine + H(+). Its pathway is alkene biosynthesis; ethylene biosynthesis via S-adenosyl-L-methionine; ethylene from S-adenosyl-L-methionine: step 1/2. Functionally, catalyzes the formation of 1-aminocyclopropane-1-carboxylate, a direct precursor of ethylene in higher plants. This Oryza sativa subsp. japonica (Rice) protein is 1-aminocyclopropane-1-carboxylate synthase 3.